The chain runs to 834 residues: 5-hydroxytryptamine receptor 2A (834 aa).

Residues 1–230 (MAHETSFNDA…TQLLRMAVTS (230 aa)) are Extracellular-facing. Positions 56–75 (TDDGQLEDTNNNNNSKRYYS) are disordered. N-linked (GlcNAc...) asparagine glycosylation is found at Asn-68, Asn-97, Asn-161, Asn-175, Asn-183, Asn-194, Asn-203, and Asn-209. The helical transmembrane segment at 231–253 (VLLGLMILVTIIGNVFVIAAIIL) threads the bilayer. The Cytoplasmic portion of the chain corresponds to 254-263 (ERNLQNVANY). The chain crosses the membrane as a helical span at residues 264–285 (LVASLAVADLFVACLVMPLGAV). Topologically, residues 286-300 (YEISQGWILGPELCD) are extracellular. Cys-299 and Cys-378 are oxidised to a cystine. The chain crosses the membrane as a helical span at residues 301–322 (IWTSCDVLCCTASILHLVAIAV). The Cytoplasmic segment spans residues 323-341 (DRYWAVTNIDYIHSRTSNR). A helical membrane pass occupies residues 342–364 (VFMMIFCVWTAAVIVSLAPQFGW). The Extracellular portion of the chain corresponds to 365-391 (KDPDYLQRIEQQKCMVSQDVSYQVFAT). Residues 392–413 (CCTFYVPLLVILALYWKIYQTA) traverse the membrane as a helical segment. The Cytoplasmic portion of the chain corresponds to 414-752 (RKRIHRRRPR…AKRERKAAKT (339 aa)). Disordered regions lie at residues 420–442 (RRPR…ATDT), 460–516 (KTGS…STSG), 531–599 (QQGK…SEDQ), 617–640 (LEQV…TSNA), and 674–743 (STLT…TLEA). Composition is skewed to polar residues over residues 482-502 (GNST…SNVD) and 532-542 (QGKSTAKSSAA). Basic and acidic residues predominate over residues 551-564 (RQEDDGQRPEHGEQ). A compositionally biased stretch (acidic residues) spans 565 to 575 (EDREELEDQDE). The segment covering 582–593 (TTATSATTAAGT) has biased composition (low complexity). Polar residues predominate over residues 674 to 694 (STLTSCNQSHPLCGTANESPS). A compositionally biased stretch (low complexity) spans 702–723 (QPTTPQQQPHQQAHQQQQQQQQ). A helical transmembrane segment spans residues 753 to 776 (LAIITGAFVVCWLPFFVMALTMPL). At 777-785 (CAACQISDS) the chain is on the extracellular side. Residues 786-808 (VASLFLWLGYFNSTLNPVIYTIF) traverse the membrane as a helical segment. Topologically, residues 809–834 (SPEFRQAFKRILFGGHRPVHYRSGKL) are cytoplasmic.

Belongs to the G-protein coupled receptor 1 family.

The protein resides in the cell membrane. Functionally, this is one of the several different receptors for 5-hydroxytryptamine (serotonin), a biogenic hormone that functions as a neurotransmitter, a hormone, and a mitogen. The activity of this receptor is mediated by G proteins which inhibit adenylate cyclase. The sequence is that of 5-hydroxytryptamine receptor 2A (5-HT1A) from Drosophila melanogaster (Fruit fly).